We begin with the raw amino-acid sequence, 214 residues long: Nucleoside triphosphate pyrophosphatase (214 aa).

D79 serves as the catalytic Proton acceptor.

It belongs to the Maf family. It depends on a divalent metal cation as a cofactor.

The protein resides in the cytoplasm. It catalyses the reaction a ribonucleoside 5'-triphosphate + H2O = a ribonucleoside 5'-phosphate + diphosphate + H(+). It carries out the reaction a 2'-deoxyribonucleoside 5'-triphosphate + H2O = a 2'-deoxyribonucleoside 5'-phosphate + diphosphate + H(+). In terms of biological role, nucleoside triphosphate pyrophosphatase. May have a dual role in cell division arrest and in preventing the incorporation of modified nucleotides into cellular nucleic acids. This chain is Nucleoside triphosphate pyrophosphatase, found in Rhodococcus jostii (strain RHA1).